Consider the following 694-residue polypeptide: Elongation factor G (694 aa).

Residues 10–285 enclose the tr-type G domain; the sequence is EKTRNIGIMA…GVVDYLPSPL (276 aa). GTP-binding positions include 19 to 26, 83 to 87, and 137 to 140; these read AHIDAGKT, DTPGH, and NKMD.

This sequence belongs to the TRAFAC class translation factor GTPase superfamily. Classic translation factor GTPase family. EF-G/EF-2 subfamily.

The protein localises to the cytoplasm. Catalyzes the GTP-dependent ribosomal translocation step during translation elongation. During this step, the ribosome changes from the pre-translocational (PRE) to the post-translocational (POST) state as the newly formed A-site-bound peptidyl-tRNA and P-site-bound deacylated tRNA move to the P and E sites, respectively. Catalyzes the coordinated movement of the two tRNA molecules, the mRNA and conformational changes in the ribosome. The chain is Elongation factor G from Lactobacillus delbrueckii subsp. bulgaricus (strain ATCC 11842 / DSM 20081 / BCRC 10696 / JCM 1002 / NBRC 13953 / NCIMB 11778 / NCTC 12712 / WDCM 00102 / Lb 14).